Consider the following 89-residue polypeptide: Cell division topological specificity factor (89 aa).

It belongs to the MinE family.

Prevents the cell division inhibition by proteins MinC and MinD at internal division sites while permitting inhibition at polar sites. This ensures cell division at the proper site by restricting the formation of a division septum at the midpoint of the long axis of the cell. The sequence is that of Cell division topological specificity factor from Janthinobacterium sp. (strain Marseille) (Minibacterium massiliensis).